A 246-amino-acid polypeptide reads, in one-letter code: Myelin-oligodendrocyte glycoprotein (246 aa).

The N-terminal stretch at 1 to 28 is a signal peptide; sequence MACLWSFSWPSCFLSLLLLLLQLSCSYA. The Extracellular segment spans residues 29–156; the sequence is GQFRVIGPGY…FYWVNPGVLT (128 aa). An Ig-like V-type domain is found at 31–144; sequence FRVIGPGYPI…EEAAMELKVE (114 aa). Residues cysteine 52 and cysteine 126 are joined by a disulfide bond. Asparagine 59 carries an N-linked (GlcNAc...) asparagine glycan. The helical transmembrane segment at 157 to 177 threads the bilayer; it reads LIALVPTILLQVPVGLVFLFL. Over 178-209 the chain is Cytoplasmic; the sequence is QHRLRGKLRAEVENLHRTFDPHFLRVPCWKIT. A helical membrane pass occupies residues 210-230; that stretch reads LFVIVPVLGPLVALIICYNWL. Residues 231 to 246 are Extracellular-facing; the sequence is HRRLAGQFLEELRNPF.

The protein belongs to the immunoglobulin superfamily. BTN/MOG family. In terms of assembly, homodimer. Found exclusively in the CNS, where it is localized on the surface of myelin and oligodendrocyte cytoplasmic membranes. Reduced expression levels are observed in jimpy and quacking dysmyelinating mutant mice.

The protein localises to the membrane. In terms of biological role, minor component of the myelin sheath. May be involved in completion and/or maintenance of the myelin sheath and in cell-cell communication. Mediates homophilic cell-cell adhesion. This Mus musculus (Mouse) protein is Myelin-oligodendrocyte glycoprotein (Mog).